Reading from the N-terminus, the 215-residue chain is Urease accessory protein UreG (215 aa).

24–31 (GPVGSGKT) provides a ligand contact to GTP.

The protein belongs to the SIMIBI class G3E GTPase family. UreG subfamily. As to quaternary structure, homodimer. UreD, UreF and UreG form a complex that acts as a GTP-hydrolysis-dependent molecular chaperone, activating the urease apoprotein by helping to assemble the nickel containing metallocenter of UreC. The UreE protein probably delivers the nickel.

The protein resides in the cytoplasm. Its function is as follows. Facilitates the functional incorporation of the urease nickel metallocenter. This process requires GTP hydrolysis, probably effectuated by UreG. The protein is Urease accessory protein UreG of Burkholderia ambifaria (strain ATCC BAA-244 / DSM 16087 / CCUG 44356 / LMG 19182 / AMMD) (Burkholderia cepacia (strain AMMD)).